The primary structure comprises 239 residues: Serine protease SplC (239 aa).

An N-terminal signal peptide occupies residues methionine 1–alanine 36. Catalysis depends on charge relay system residues histidine 75, aspartate 113, and serine 193.

This sequence belongs to the peptidase S1B family.

The protein localises to the secreted. This chain is Serine protease SplC (splC), found in Staphylococcus aureus (strain MSSA476).